The chain runs to 113 residues: Protein USP1 (113 aa).

The N-terminal stretch at 1–18 is a signal peptide; that stretch reads MKITMLFAALSAASGAFA. 6 tandem repeats follow at residues 32-37, 40-45, 46-49, 50-53, 59-65, and 69-75. The segment at 32-45 is 2 X 6 AA repeats; the sequence is IGAGVGIGIGAGVG. Residues 46–53 form a 2 X 4 AA approximate tandem repeats region; sequence PYGYPYGA. The interval 59–75 is 2 X 7 AA approximate repeats; sequence LQLLPLRWLSLQWIPLR.

It localises to the secreted. The chain is Protein USP1 (USP1) from Puccinia graminis (Black stem rust fungus).